The sequence spans 431 residues: MSLMTKLGFRALVASCLITAGSAANAQVNVLITGVGSTQFPIATANFTNEANLPQQVTSIVRADLARSGKFTNIDAGSTPVPETASVDLGAWKAKGANAFVAGSVNRDANGQYKVNFILYDTVKQQSLGGLSLTATDTTLRTAGHKIADYIYQKLLGVRGVFATRLSYVIKTGNRYQLQISDSDGQNARIALSSTEPIISPAWSPSSTKVAYVSFERKKPIVYIHDLPTGRRYMVSDQKGNNSAPAWSPDSNTLAVALSLTGNTQIYTVNANGGGLRRLTQSSSIDTEPFYSPDGRWIYFTSDRGGAPQIYRMPAQGESAGAAQRVTFTGSYNTSPRVSPDGKLLAYISRTGGGFKLYVQDLQTGAANAITNTNRDESPSFAANGQYVLYATQSGGRNVLAAVPSDGSAPPQILSVQGGSVREPSWGPFMQ.

Residues 1–26 form the signal peptide; it reads MSLMTKLGFRALVASCLITAGSAANA. Residues 406 to 431 are disordered; sequence DGSAPPQILSVQGGSVREPSWGPFMQ.

It belongs to the TolB family. The Tol-Pal system is composed of five core proteins: the inner membrane proteins TolA, TolQ and TolR, the periplasmic protein TolB and the outer membrane protein Pal. They form a network linking the inner and outer membranes and the peptidoglycan layer.

Its subcellular location is the periplasm. Part of the Tol-Pal system, which plays a role in outer membrane invagination during cell division and is important for maintaining outer membrane integrity. The chain is Tol-Pal system protein TolB from Burkholderia orbicola (strain AU 1054).